We begin with the raw amino-acid sequence, 150 residues long: MRCVVYSIAKSSPLELVKIYQKQCKQFDCELELVDLFPKNTANAQKVSKELAQKSYSLAFEPYLNPKAKNIALHPKAQRGDSFAFSKMLENHLNINFFIAGAYGFEENFLKDCQAWSLSEMTFSHEVAKIVLCEQIYRALSIIFKHPYHK.

Residues A100 and 118–123 (LSEMTF) each bind S-adenosyl-L-methionine.

This sequence belongs to the RNA methyltransferase RlmH family. As to quaternary structure, homodimer.

It localises to the cytoplasm. It carries out the reaction pseudouridine(1915) in 23S rRNA + S-adenosyl-L-methionine = N(3)-methylpseudouridine(1915) in 23S rRNA + S-adenosyl-L-homocysteine + H(+). Specifically methylates the pseudouridine at position 1915 (m3Psi1915) in 23S rRNA. This chain is Ribosomal RNA large subunit methyltransferase H, found in Helicobacter pylori (strain Shi470).